The primary structure comprises 969 residues: Squamosa promoter-binding-like protein 6 (969 aa).

2 disordered regions span residues 1-25 (MEAA…DMDR) and 54-81 (EASG…VNAR). Residues 55–74 (ASGLALNSSPSSSEEAGAAS) are compositionally biased toward low complexity. The SBP-type zinc-finger motif lies at 149-226 (GPACQVEGCT…AGHNRRRRKT (78 aa)). Zn(2+)-binding residues include cysteine 152, cysteine 157, cysteine 174, histidine 177, cysteine 193, cysteine 196, histidine 200, and cysteine 212. Residues 209–225 (KRSCRRRLAGHNRRRRK) carry the Bipartite nuclear localization signal motif. Residues 377 to 434 (GMEGFEDGYEGSPTPAFKTTDSPNCPSWMHQDSTQSPPQTSGNSDSTSAQSLSSSNGD) form a disordered region. Residues 393-419 (FKTTDSPNCPSWMHQDSTQSPPQTSGN) are compositionally biased toward polar residues. Over residues 420–431 (SDSTSAQSLSSS) the composition is skewed to low complexity.

In terms of tissue distribution, ubiquitous.

It is found in the nucleus. Its function is as follows. Trans-acting factor that binds specifically to the consensus nucleotide sequence 5'-TNCGTACAA-3'. This Oryza sativa subsp. japonica (Rice) protein is Squamosa promoter-binding-like protein 6 (SPL6).